The following is a 164-amino-acid chain: Transmembrane protein B169L (164 aa).

2 consecutive transmembrane segments (helical) span residues 28-48 (NPFI…FAIC) and 60-80 (TAIY…YVLN). N-linked (GlcNAc...) asparagine; by host glycosylation occurs at Asn88. Residues 114–142 (SPPSVPDELEEDRPKMIPAGSKPADFKPA) are disordered.

This sequence belongs to the asfivirus B169L family.

The protein localises to the host membrane. Its subcellular location is the virion. This Ornithodoros (relapsing fever ticks) protein is Transmembrane protein B169L.